The sequence spans 406 residues: Vacuole membrane protein 1 (406 aa).

Basic and acidic residues predominate over residues 1 to 20; that stretch reads MAENGKNCDQRRVAMNKEQH. The segment at 1–36 is disordered; that stretch reads MAENGKNCDQRRVAMNKEQHNGNFTDPSSVNEKKRR. Ala2 carries the N-acetylalanine modification. At 2-43 the chain is on the cytoplasmic side; that stretch reads AENGKNCDQRRVAMNKEQHNGNFTDPSSVNEKKRREREERQN. Residues 21-30 are compositionally biased toward polar residues; that stretch reads NGNFTDPSSV. The chain crosses the membrane as a helical span at residues 44–64; the sequence is IVLWRQPLITLQYFSLEILVI. Residues 65 to 77 lie on the Extracellular side of the membrane; sequence LKEWTSKLWHRQS. A helical transmembrane segment spans residues 78 to 98; sequence IVVSFLLLLAVLIATYYVEGA. Topologically, residues 99-109 are cytoplasmic; that stretch reads HQQYVQRIEKQ. A helical transmembrane segment spans residues 110-130; sequence FLLYAYWIGLGILSSVGLGTG. Residues 131–250 lie on the Extracellular side of the membrane; it reads LHTFLLYLGP…ASRAKLAVQK (120 aa). Residues 173–316 form a VTT domain region; that stretch reads GTEGTISLWS…FVIITFSKHI (144 aa). Residues 251 to 271 form a helical membrane-spanning segment; the sequence is LVQKVGFFGILACASIPNPLF. Residues 272–273 are Cytoplasmic-facing; the sequence is DL. Residues 274–294 form a helical membrane-spanning segment; the sequence is AGITCGHFLVPFWTFFGATLI. The Extracellular segment spans residues 295–305; sequence GKAIIKMHIQK. Residues 306-326 form a helical membrane-spanning segment; it reads IFVIITFSKHIVEQMVAFIGA. At 327–363 the chain is on the cytoplasmic side; sequence VPGIGPSLQKPFQEYLEAQRQKLHHKSEMGTPQGENW. A helical transmembrane segment spans residues 364–384; the sequence is LSWMFEKLVVVMVCYFILSII. The Extracellular segment spans residues 385-406; that stretch reads NSMAQSYAKRIQQRLNSEEKTK.

This sequence belongs to the VMP1 family. As to quaternary structure, interacts with BECN1. Interacts with TJP1. Interacts with TP53INP2. Interacts with TMEM41B. Interacts with ATP2A2, PLN and SLN; competes with PLN and SLN to prevent them from forming an inhibitory complex with ATP2A2. Interacts with ATG2A.

It is found in the endoplasmic reticulum-Golgi intermediate compartment membrane. The protein localises to the cell membrane. The protein resides in the vacuole membrane. It localises to the endoplasmic reticulum membrane. The catalysed reaction is a 1,2-diacyl-sn-glycero-3-phospho-L-serine(in) = a 1,2-diacyl-sn-glycero-3-phospho-L-serine(out). It carries out the reaction cholesterol(in) = cholesterol(out). The enzyme catalyses a 1,2-diacyl-sn-glycero-3-phosphocholine(in) = a 1,2-diacyl-sn-glycero-3-phosphocholine(out). It catalyses the reaction a 1,2-diacyl-sn-glycero-3-phosphoethanolamine(in) = a 1,2-diacyl-sn-glycero-3-phosphoethanolamine(out). Functionally, phospholipid scramblase involved in lipid homeostasis and membrane dynamics processes. Has phospholipid scramblase activity toward cholesterol and phosphatidylserine, as well as phosphatidylethanolamine and phosphatidylcholine. Required for autophagosome formation: participates in early stages of autophagosome biogenesis at the endoplasmic reticulum (ER) membrane by reequilibrating the leaflets of the ER as lipids are extracted by ATG2 (ATG2A or ATG2B) to mediate autophagosome assembly. Regulates ATP2A2 activity to control ER-isolation membrane contacts for autophagosome formation. In addition to autophagy, involved in other processes in which phospholipid scramblase activity is required. Modulates ER contacts with lipid droplets, mitochondria and endosomes. Plays an essential role in formation of cell junctions. Upon stress such as bacterial and viral infection, promotes formation of cytoplasmic vacuoles followed by cell death. Involved in the cytoplasmic vacuolization of acinar cells during the early stage of acute pancreatitis. This Pongo abelii (Sumatran orangutan) protein is Vacuole membrane protein 1.